Consider the following 571-residue polypeptide: MSKSRRLFLSMQGDDDFWGNGDRLEEKKLPSIKQEKSKVMDDEDLEDRYYFKQNKLGRQQSESRHENEENKVSQEEKWNLRVPLEESILIKKEEPVPEMEESETIIASEEEQLLETSPSVDTNEEFYNNYRNYFQRRPEVIFLIRSMDENAVENYDKEFIDLYEKTRKSLEVCPNPELNQILRCECSSNTSTANSDNRLPNNHAVVVSNFREPDRRLGRYSKYYYHHNVGPEVYSRKVFVGGLPGCVKESDILNFFSRYGRLQVDWPSKHFGCKSDSDPSVCGDATSSFQQTSHLAMSSPPFGQINPFMSDHSTTSSETQNFGMNRNGNGGGVITHGMVRMMNAARNAGFGGGEPRSVGGESSEEKKQHHLGYVFLLFEKERSVRELVSDCFEEEEGLFITLESSIEPIRVQIRPWLLADAEFLMDFNVPINTKLVAFIGGVPRPLKAVELAHFFEQTYGNVVCVGIDIDNKFKYPRGSGRVAFSNYDAYVQAITDRYIVLDHEDIHKRVEIKPYFFHNQSCEECSSRYNRQYAPFFCPSLECFQYYCEPCWHKMHSHPSRFHHMPVVKGI.

Disordered regions lie at residues 1 to 23 (MSKS…NGDR) and 51 to 75 (FKQN…VSQE). Positions 61 to 75 (SESRHENEENKVSQE) are enriched in basic and acidic residues. The RRM domain maps to 435 to 517 (LVAFIGGVPR…KRVEIKPYFF (83 aa)).

In terms of biological role, cytoplasmic polyadenylation element binding protein that binds to and regulates the translation of specific mRNAs. The sequence is that of Cytoplasmic polyadenylation element-binding protein 2 (cpb-2) from Caenorhabditis remanei (Caenorhabditis vulgaris).